The following is a 209-amino-acid chain: Uracil phosphoribosyltransferase (209 aa).

Residues R79, R104, and 131-139 (DPMLATGGS) contribute to the 5-phospho-alpha-D-ribose 1-diphosphate site. Uracil contacts are provided by residues I194 and 199-201 (GDA). Residue D200 coordinates 5-phospho-alpha-D-ribose 1-diphosphate.

Belongs to the UPRTase family. Requires Mg(2+) as cofactor.

The enzyme catalyses UMP + diphosphate = 5-phospho-alpha-D-ribose 1-diphosphate + uracil. The protein operates within pyrimidine metabolism; UMP biosynthesis via salvage pathway; UMP from uracil: step 1/1. Allosterically activated by GTP. Catalyzes the conversion of uracil and 5-phospho-alpha-D-ribose 1-diphosphate (PRPP) to UMP and diphosphate. This is Uracil phosphoribosyltransferase from Streptococcus uberis (strain ATCC BAA-854 / 0140J).